We begin with the raw amino-acid sequence, 828 residues long: Periplasmic nitrate reductase (828 aa).

The tat-type signal signal peptide spans 1-31 (MKLSRRSFMKANAVAAAAAAAGLSVPGVARA). The 4Fe-4S Mo/W bis-MGD-type domain occupies 39–95 (IKWDKAPCRFCGTGCGVLVGTQQGRVVACQGDPDAPVNRGLNCIKGYFLPKIMYGKD). Residues Cys-46, Cys-49, Cys-53, and Cys-81 each contribute to the [4Fe-4S] cluster site. Residues Lys-83, Gln-150, Asn-175, Cys-179, 212-219 (WGANMAEM), 243-247 (STYQH), 262-264 (QSD), Met-372, Gln-376, Asn-482, 508-509 (SD), Lys-531, Asp-558, and 718-727 (TGRVLEHWHT) contribute to the Mo-bis(molybdopterin guanine dinucleotide) site. Position 794 (Phe-794) interacts with substrate. Asn-802 and Lys-819 together coordinate Mo-bis(molybdopterin guanine dinucleotide).

It belongs to the prokaryotic molybdopterin-containing oxidoreductase family. NasA/NapA/NarB subfamily. Component of the periplasmic nitrate reductase NapAB complex composed of NapA and NapB. It depends on [4Fe-4S] cluster as a cofactor. Requires Mo-bis(molybdopterin guanine dinucleotide) as cofactor. Post-translationally, predicted to be exported by the Tat system. The position of the signal peptide cleavage has not been experimentally proven.

It localises to the periplasm. It carries out the reaction 2 Fe(II)-[cytochrome] + nitrate + 2 H(+) = 2 Fe(III)-[cytochrome] + nitrite + H2O. Catalytic subunit of the periplasmic nitrate reductase complex NapAB. Receives electrons from NapB and catalyzes the reduction of nitrate to nitrite. This is Periplasmic nitrate reductase from Escherichia coli O8 (strain IAI1).